A 446-amino-acid polypeptide reads, in one-letter code: Tubulin beta-8 chain (446 aa).

GTP-binding residues include Gln-11, Glu-69, Ser-138, Gly-142, Thr-143, Gly-144, Asn-204, and Asn-226. Glu-69 is a Mg(2+) binding site. Positions 426–446 (QDATAEDDYDEDDDAAAADEA) are disordered. Acidic residues predominate over residues 429 to 446 (TAEDDYDEDDDAAAADEA).

The protein belongs to the tubulin family. In terms of assembly, dimer of alpha and beta chains. A typical microtubule is a hollow water-filled tube with an outer diameter of 25 nm and an inner diameter of 15 nM. Alpha-beta heterodimers associate head-to-tail to form protofilaments running lengthwise along the microtubule wall with the beta-tubulin subunit facing the microtubule plus end conferring a structural polarity. Microtubules usually have 13 protofilaments but different protofilament numbers can be found in some organisms and specialized cells. Mg(2+) serves as cofactor. As to expression, expressed in anthers.

It localises to the cytoplasm. The protein localises to the cytoskeleton. Its function is as follows. Tubulin is the major constituent of microtubules, a cylinder consisting of laterally associated linear protofilaments composed of alpha- and beta-tubulin heterodimers. Microtubules grow by the addition of GTP-tubulin dimers to the microtubule end, where a stabilizing cap forms. Below the cap, tubulin dimers are in GDP-bound state, owing to GTPase activity of alpha-tubulin. The sequence is that of Tubulin beta-8 chain (TUBB8) from Oryza sativa subsp. japonica (Rice).